The sequence spans 90 residues: uncharacterized protein (90 aa).

The chain crosses the membrane as a helical span at residues V12–F32.

It localises to the membrane. This is an uncharacterized protein from Mycoplasma pneumoniae (strain ATCC 29342 / M129 / Subtype 1) (Mycoplasmoides pneumoniae).